A 223-amino-acid chain; its full sequence is Ribosomal RNA small subunit methyltransferase G (223 aa).

Residues Gly-83, Leu-88, 134-135, and Arg-152 each bind S-adenosyl-L-methionine; that span reads AE.

It belongs to the methyltransferase superfamily. RNA methyltransferase RsmG family.

The protein localises to the cytoplasm. Specifically methylates the N7 position of guanine in position 518 of 16S rRNA. This Corynebacterium diphtheriae (strain ATCC 700971 / NCTC 13129 / Biotype gravis) protein is Ribosomal RNA small subunit methyltransferase G.